The following is a 565-amino-acid chain: Probable serine/threonine-protein kinase abkA (565 aa).

The stretch at 44–77 (NNNNISLKDKFKDLKDLKDNLNEKKINNDNDDDD) forms a coiled coil. The Protein kinase domain occupies 231-565 (LFQDDPIAAA…FKNIFYKNYK (335 aa)). ATP-binding positions include 237-245 (IAAASIGQV) and Lys-259. Residue Asp-401 is the Proton acceptor of the active site.

This sequence belongs to the protein kinase superfamily. ADCK protein kinase family.

This Dictyostelium discoideum (Social amoeba) protein is Probable serine/threonine-protein kinase abkA (abkA).